The sequence spans 392 residues: Alanine--glyoxylate aminotransferase (392 aa).

Lys-209 bears the N6-(pyridoxal phosphate)lysine mark. Position 225 is an N6-acetyllysine; alternate (Lys-225). An N6-succinyllysine; alternate modification is found at Lys-225. 2 positions are modified to N6-acetyllysine: Lys-234 and Lys-312. Arg-360 contributes to the substrate binding site. Residues 390 to 392 (SQL) carry the Microbody targeting signal motif.

The protein belongs to the class-V pyridoxal-phosphate-dependent aminotransferase family. Homodimer. Pyridoxal 5'-phosphate is required as a cofactor.

It localises to the peroxisome. The catalysed reaction is L-serine + pyruvate = 3-hydroxypyruvate + L-alanine. It catalyses the reaction glyoxylate + L-alanine = glycine + pyruvate. Peroxisomal aminotransferase that catalyzes the transamination of glyoxylate to glycine and contributes to the glyoxylate detoxification. Also catalyzes the transamination between L-serine and pyruvate and contributes to gluconeogenesis from the L-serine metabolism. This is Alanine--glyoxylate aminotransferase from Oryctolagus cuniculus (Rabbit).